The primary structure comprises 670 residues: MNLNYQYAGLIPILPVFPSIFIGIGLMSFRKSFRNLRKFVGSMSIAFMFLTLILSLLFFNDQLSESYSYRFLFPWLSTKNLTLDIGYLIDPLTSIMLVLVTSVAVTVMIYSDGYMLHDQGYIRFFAYLSLFTASMLGLIVSPNLIQVYVFWELIGMCSYLLVGFWSTRPTAASACQKAFITNRVGDFGLLLGILGFYWLTGSFQFDIIQDRLNELLLTNNLNFTLFIISSVLLFLGPIAKSAQFPLHIWLPDAMEGPTPISALIHAATMVAAGIFLVARLLPIFQLSPLLMILIAFTGAITALLGACLAVAQTDLKRGLAYSTMSQLGYMMLGLGIGGYQAAIFHLITHAYSKALLFLGSGSVIHSMEPVVGYDPNKSQNIDYMGGLRKYMPITGVTFLIGTLSLCGIPPFACFWSKDEIIADAFFHLPLLGFIAWLTAGLTGFYMFRLYLLTFEGEFRAHKNLKSSSLEYPHESSFSMTLPLILLMFPTIFIGFLGLPYNLGFIQSQILSTWLVGPSIDLNSSSNWIDFFKTSATSVGIAFLGICFSFLLYSPKNASNRDFNQISNPVPKGFLSSYVKSFYNWSLNRAYIDKFYELTWIKWCGIFAQFTSYLDRWFFDGFVNGVGLLTLISGEALRYGENGKVSSYLFVILFSFILLILLGNFNSVFYF.

16 helical membrane passes run 9–29 (GLIP…LMSF), 39–59 (FVGS…LLFF), 85–105 (IGYL…SVAV), 120–140 (GYIR…GLIV), 144–164 (LIQV…LVGF), 188–208 (GLLL…FDII), 215–235 (LLLT…LLFL), 258–278 (TPIS…FLVA), 290–310 (LMIL…CLAV), 327–347 (LGYM…FHLI), 354–374 (ALLF…VGYD), 395–415 (GVTF…ACFW), 424–444 (AFFH…LTGF), 479–499 (MTLP…LGLP), 534–554 (SATS…LYSP), and 648–668 (LFVI…NSVF).

This sequence belongs to the complex I subunit 5 family. In terms of assembly, NDH is composed of at least 16 different subunits, 5 of which are encoded in the nucleus.

Its subcellular location is the plastid. It localises to the chloroplast thylakoid membrane. The enzyme catalyses a plastoquinone + NADH + (n+1) H(+)(in) = a plastoquinol + NAD(+) + n H(+)(out). The catalysed reaction is a plastoquinone + NADPH + (n+1) H(+)(in) = a plastoquinol + NADP(+) + n H(+)(out). NDH shuttles electrons from NAD(P)H:plastoquinone, via FMN and iron-sulfur (Fe-S) centers, to quinones in the photosynthetic chain and possibly in a chloroplast respiratory chain. The immediate electron acceptor for the enzyme in this species is believed to be plastoquinone. Couples the redox reaction to proton translocation, and thus conserves the redox energy in a proton gradient. The chain is NAD(P)H-quinone oxidoreductase subunit 5, chloroplastic (ndhF) from Chaetosphaeridium globosum (Charophycean green alga).